The primary structure comprises 423 residues: Salicylate 5-hydroxylase, large oxygenase component (423 aa).

Residues 1 to 20 (MSEPQRLKPVFPQDPKWPGE) form a disordered region. Positions 49–168 (WCYVGLEAEI…VAARGGAVFA (120 aa)) constitute a Rieske domain. The [2Fe-2S] cluster site is built by Cys-91, His-93, Cys-111, and His-114. 3 residues coordinate Fe cation: His-224, His-229, and Asp-370.

The protein belongs to the bacterial ring-hydroxylating dioxygenase alpha subunit family. In terms of assembly, the salicylate 5-hydroxylase (S5H) multicomponent enzyme system is composed of an electron transfer component and an oxygenase component. The electron transfer component is comprised of a ferredoxin reductase (NagAa) and a ferredoxin (NagAb), and the oxygenase component is formed by a large subunit (NagG) and a small subunit (NagH). Fe cation serves as cofactor. Requires [2Fe-2S] cluster as cofactor.

The catalysed reaction is salicylate + NADH + O2 + H(+) = 2,5-dihydroxybenzoate + NAD(+) + H2O. It functions in the pathway aromatic compound metabolism; naphthalene degradation. Oxygenase component of the salicylate 5-hydroxylase (S5H) multicomponent enzyme system which catalyzes the 5-hydroxylation of salicylate to gentisate. Active only on substrates with a ring-substituted carboxylate group with an adjacent hydroxyl group. Primarily active against salicylate and substituted salicylates, but not against 2-hydroxycinnamate, 3-hydroxycinnamate, 2-hydroxyphenylacetate, 3-hydroxyphenylacetate, 2-hydroxybenzophenone, 1-hydroxy-2-naphthoate, 4-methoxysalicylate or 2-hydroxyacetophenone. In Ralstonia sp, this protein is Salicylate 5-hydroxylase, large oxygenase component.